The following is a 687-amino-acid chain: Variant-specific surface protein VSP4A1 (687 aa).

Residues 1-14 (MLLTAFYVVLGSFA) form the signal peptide. Topologically, residues 15–660 (APCQQDGDHI…SGLSTGAIAG (646 aa)) are extracellular. Residues 661–681 (ISVAAIVVVGGLVGFLCWWFI) form a helical membrane-spanning segment. Over 682–687 (CRGKAQ) the chain is Cytoplasmic.

The protein belongs to the Giardia variant surface protein family. Post-translationally, O-glycosylated. The major glycan is a trisaccharide with Glc at the reducing terminus. In terms of processing, palmitoylated.

Its subcellular location is the cell membrane. In Giardia intestinalis (Giardia lamblia), this protein is Variant-specific surface protein VSP4A1.